A 182-amino-acid polypeptide reads, in one-letter code: Adenylate kinase (182 aa).

12–17 (GAGKGT) contacts ATP. The NMP stretch occupies residues 32–61 (STGELLRKEIEMNTALGIQVKDIMNRGELV). AMP contacts are provided by residues Thr33, Arg38, 59–61 (ELV), 85–88 (GYPR), and Gln92. The tract at residues 126–132 (LRGRKDD) is LID. Position 127 (Arg127) interacts with ATP. The AMP site is built by Arg129 and Arg140. Arg168 lines the ATP pocket.

The protein belongs to the adenylate kinase family. As to quaternary structure, monomer.

The protein localises to the cytoplasm. It catalyses the reaction AMP + ATP = 2 ADP. Its pathway is purine metabolism; AMP biosynthesis via salvage pathway; AMP from ADP: step 1/1. In terms of biological role, catalyzes the reversible transfer of the terminal phosphate group between ATP and AMP. Plays an important role in cellular energy homeostasis and in adenine nucleotide metabolism. This Prochlorococcus marinus (strain MIT 9301) protein is Adenylate kinase.